Here is a 131-residue protein sequence, read N- to C-terminus: MRHRKSGRQLNRNSSHRQAMFRNMASSLVRHEVIKTTVAKAKELRRVVEPLITLAKSDSVANRRLAFARTRDAEVVGKLFNELGPRYQERPGGYTRILKCGLRTGDKAPMAYIELVGRPEAAEAVEADDAE.

This sequence belongs to the bacterial ribosomal protein bL17 family. Part of the 50S ribosomal subunit. Contacts protein L32.

In Shewanella violacea (strain JCM 10179 / CIP 106290 / LMG 19151 / DSS12), this protein is Large ribosomal subunit protein bL17.